The primary structure comprises 325 residues: UDP-N-acetylenolpyruvoylglucosamine reductase (325 aa).

Residues 40–221 enclose the FAD-binding PCMH-type domain; that stretch reads RTGGLAELFY…RAAMDEVALH (182 aa). Residue arginine 186 is part of the active site. The active-site Proton donor is serine 235. Glutamate 305 is a catalytic residue.

This sequence belongs to the MurB family. The cofactor is FAD.

The protein resides in the cytoplasm. It carries out the reaction UDP-N-acetyl-alpha-D-muramate + NADP(+) = UDP-N-acetyl-3-O-(1-carboxyvinyl)-alpha-D-glucosamine + NADPH + H(+). It functions in the pathway cell wall biogenesis; peptidoglycan biosynthesis. Functionally, cell wall formation. This is UDP-N-acetylenolpyruvoylglucosamine reductase from Bartonella henselae (strain ATCC 49882 / DSM 28221 / CCUG 30454 / Houston 1) (Rochalimaea henselae).